Consider the following 523-residue polypeptide: Peptide chain release factor 3 (523 aa).

Residues 10-277 (KKRRTFAIIS…SFVDLAPAPE (268 aa)) form the tr-type G domain. GTP contacts are provided by residues 19-26 (SHPDAGKT), 87-91 (DTPGH), and 141-144 (NKLD).

The protein belongs to the TRAFAC class translation factor GTPase superfamily. Classic translation factor GTPase family. PrfC subfamily.

Its subcellular location is the cytoplasm. In terms of biological role, increases the formation of ribosomal termination complexes and stimulates activities of RF-1 and RF-2. It binds guanine nucleotides and has strong preference for UGA stop codons. It may interact directly with the ribosome. The stimulation of RF-1 and RF-2 is significantly reduced by GTP and GDP, but not by GMP. This chain is Peptide chain release factor 3, found in Lactobacillus helveticus (strain DPC 4571).